The primary structure comprises 1563 residues: MKEEETIEISEKEKDKERNDNQDTLTISWIEDWRNEETATKNENNKNNNSDGDSDDDDYYDDDEEIKNSRYNLFLEKILTLESNSNLKNILSLNINFKKDNKKSKETDTAATTTTTTTTTTTTTTTTTPTATANKKYIRTNNLLNNNNSSSSSSSNNNNNNNNNNNNNNNNNNNNNNNNNNNNNNNNNNNNNNNNNNNNNNNGENITYITSPLSNESLESTEECCFFLVHLPITKDLIFNQFTCLLIHLFQIEYNNTIIINNATSSSSVNSLNRSYNNSNNNNNNNYNSYNNRGNNYNNNNQQQQQQQNPNLKIRDLEGYQDCSHLKKLCLTIHDYLTQLLQRNPLIWYDSIINWSLSTLTIITRLLIILKNNKSQQQQQQQQQQQQQQQQQQQQQQQTKNKTQFPPPPPPPLRQPITPISAMVRERLDFYSFRSLLSLVLHLTRIFSIETFIEKSNVTQFLDITSKSSSSSSSSSSSSSSSSSSSSSSSSSSSSSKTIKPKKLPIYELGWILCHLGKKNPSLILGLTFNHYLKNIGLNSNNNNNKVNSKSQYIQDINCFQILEFLALQPSSYLSIIFQQHIDKIISNHKSNKNKNNTQFLKDIKTFLMLITKDDVFLSIGLPIILDKLSPFGINQFDNNNNNNNNNNNNNNNNNNNNNNNNNNNNNNNNNNNNNNNNNNKNNNNNSIKEDNSSEKDIESIKEILEKVLLGNSQVISFYSKRILLVLYHCCFGDSNDITFSSYSTSTLLQIKNQTRYNVSIKLLTSIVKDRLEKQLINKLYSPILNNNNNNNNNNNNNNNNNNNNNNNNNNNNNNNNNQQQQQQSQEIENSTFINNLNQDENITFYLNQIQCNNNNNNNNNNNNNNNNKLIKEKNNIIIKLISLIGMDSIYSSLIILNHIISKLKSNQFIQYFYTLVEQFQAVNSNTIEFFINDLFKSIDSFSHDDLITLLNNLLELVKITPPPSSSSPSNLSIYNETLKCISSNWVVLLKLIKHPNLIESNKMMSIEILYHSFNNRYNNNNNNSQSIQQLEISNNNNNIKKKEIYPSTLLSDKEMLEIRVLLEKILNLIFKSFKEKNSFERLKKFEIYKNLYLLICNGSSVYFSSTIDLILDSLFSKKTDMIIKLPILCALSPANTLPPPNYPANLVNAGSGSGNFGNGDDDDDEYGDDEYGANRNEKEELYFKQIINPSLPLSQPLIMLPMQSSLLEINYERKYYHYKFNDMNNPNHIPFTNKPKNLKKRIENNQSSAIDTTNNNNKNNEILTYKKQRMKKKKQSIQQNGNINNEQQQEEDDNDDADDQNEQDDYEKYNILNNENDLQSFIKSLVLYDGGGGSGFNNHGDINDRLQILTNQFLLRVSSPYLEPSYENYQEILPKQSHYERDIFIRNLFQQNPFLYRVLEIISIDGRELTKCLEVIKSLLVNEISYWYQCRNSYSESPIKSSHYHTTILLVKALINAEFIIHPLNLSLELFDKIKAEEISYILTSIWNFIKDYQPNPSQYQSSSSSSSSSSPPSNNTIIPTFKRVFSNCNTTPYSLTLKAIFHNHIKELCFHYARFFPKKYY.

Basic and acidic residues-rich tracts occupy residues 1–21 (MKEEETIEISEKEKDKERNDN) and 31–44 (EDWRNEETATKNEN). Disordered regions lie at residues 1–63 (MKEE…YDDD), 102–208 (KKSK…NITY), and 270–310 (NSLN…QQNP). A compositionally biased stretch (acidic residues) spans 52-63 (GDSDDDDYYDDD). Low complexity-rich tracts occupy residues 109-133 (TAATTTTTTTTTTTTTTTTTPTATA) and 141-202 (NNLL…NNNN). Residues 350-370 (DSIINWSLSTLTIITRLLIIL) form a helical membrane-spanning segment. The segment covering 381-398 (QQQQQQQQQQQQQQQQQQ) has biased composition (low complexity). Disordered regions lie at residues 381–417 (QQQQQQQQQQQQQQQQQQTKNKTQFPPPPPPPLRQPI), 466–498 (SKSSSSSSSSSSSSSSSSSSSSSSSSSSSSSKT), 637–694 (FDNN…DNSS), and 784–828 (ILNN…SQEI). Positions 405-414 (FPPPPPPPLR) are enriched in pro residues. 3 stretches are compositionally biased toward low complexity: residues 468–496 (SSSSSSSSSSSSSSSSSSSSSSSSSSSSS), 639–686 (NNNN…NNNN), and 786–824 (NNNNNNNNNNNNNNNNNNNNNNNNNNNNNNNNNQQQQQQ). Residues 877 to 897 (IIIKLISLIGMDSIYSSLIIL) traverse the membrane as a helical segment. Disordered stretches follow at residues 1154 to 1173 (SGNFGNGDDDDDEYGDDEYG) and 1268 to 1303 (KQRMKKKKQSIQQNGNINNEQQQEEDDNDDADDQNE). Over residues 1160–1172 (GDDDDDEYGDDEY) the composition is skewed to acidic residues. Residues 1277 to 1288 (SIQQNGNINNEQ) show a composition bias toward low complexity. A compositionally biased stretch (acidic residues) spans 1289-1303 (QQEEDDNDDADDQNE).

This sequence belongs to the Integrator subunit 5 family. As to quaternary structure, component of the Integrator complex. The core complex associates with protein phosphatase 2A subunits, to form the Integrator-PP2A (INTAC) complex.

It is found in the nucleus. The protein localises to the cytoplasm. Its subcellular location is the nucleus membrane. Its function is as follows. Component of the integrator complex, a multiprotein complex that terminates RNA polymerase II (Pol II) transcription in the promoter-proximal region of genes. The integrator complex provides a quality checkpoint during transcription elongation by driving premature transcription termination of transcripts that are unfavorably configured for transcriptional elongation: the complex terminates transcription by (1) catalyzing dephosphorylation of the C-terminal domain (CTD) of Pol II subunit polr2a, (2) degrading the exiting nascent RNA transcript via endonuclease activity and (3) promoting the release of Pol II from bound DNA. The integrator complex is also involved in terminating the synthesis of non-coding Pol II transcripts, such as enhancer RNAs (eRNAs), small nuclear RNAs (snRNAs), telomerase RNAs and long non-coding RNAs (lncRNAs). This is Integrator complex subunit 5-like protein from Dictyostelium discoideum (Social amoeba).